The chain runs to 453 residues: DDB1- and CUL4-associated factor 12 (453 aa).

Residues 1–12 (MARKVVSRKRKA) show a composition bias toward basic residues. Positions 1–34 (MARKVVSRKRKAPASPGAGSDAQGPQFGWDHSLH) are disordered. The interval 1–38 (MARKVVSRKRKAPASPGAGSDAQGPQFGWDHSLHKRKR) is required for nuclear location and interaction with MOV10. Position 15 is a phosphoserine (Ser15). WD repeat units follow at residues 81-122 (EREF…TSQI), 123-175 (TKIP…TLDP), 176-242 (VCVG…ALKD), 243-286 (IPKE…NTLS), 287-331 (KLLS…SYNV), and 332-366 (KSVCSRERGSGIRSVSFYEHIITVGTGQGSLLFYD).

This sequence belongs to the WD repeat DCAF12 family. As to quaternary structure, component of the DCX(DCAF12) E3 ubiquitin ligase complex, at least composed of CUL4 (CUL4A or CUL4B), DDB1, DCAF12 and RBX1. Highly expressed in lung cancer tissues and some cancer cell lines. Restricted expression in normal testis.

The protein resides in the cytoplasm. It localises to the cytoskeleton. The protein localises to the microtubule organizing center. It is found in the centrosome. Its subcellular location is the nucleus. It functions in the pathway protein modification; protein ubiquitination. Its function is as follows. Substrate-recognition component of a DCX (DDB1-CUL4-X-box) E3 ubiquitin-protein ligase complex of the DesCEND (destruction via C-end degrons) pathway, which recognizes a C-degron located at the extreme C terminus of target proteins, leading to their ubiquitination and degradation. The C-degron recognized by the DesCEND pathway is usually a motif of less than ten residues and can be present in full-length proteins, truncated proteins or proteolytically cleaved forms. The DCX(DCAF12) complex specifically recognizes proteins with a diglutamate (Glu-Glu) at the C-terminus, such as MAGEA3, MAGEA6 and CCT5, leading to their ubiquitination and degradation. Ubiquitination of MAGEA3, MAGEA6 by DCX(DCAF12) complex is required for starvation-induced autophagy. Also directly recognizes the C-terminal glutamate-leucine (Glu-Leu) degron as an alternative degron in proteins such as MOV10, leading to their ubiquitination and degradation. Controls the protein level of MOV10 during spermatogenesis and in T cells, especially after their activation. The protein is DDB1- and CUL4-associated factor 12 of Homo sapiens (Human).